The sequence spans 354 residues: Fructose-1,6-bisphosphatase class 1 (354 aa).

Positions 112, 134, 136, and 137 each coordinate Mg(2+). Substrate is bound by residues 137-140 (DGSS), asparagine 229, tyrosine 257, and lysine 287. Residue glutamate 293 coordinates Mg(2+).

Belongs to the FBPase class 1 family. As to quaternary structure, homotetramer. It depends on Mg(2+) as a cofactor.

It localises to the cytoplasm. It carries out the reaction beta-D-fructose 1,6-bisphosphate + H2O = beta-D-fructose 6-phosphate + phosphate. It participates in carbohydrate biosynthesis; Calvin cycle. This is Fructose-1,6-bisphosphatase class 1 from Trichodesmium erythraeum (strain IMS101).